Consider the following 267-residue polypeptide: Tryptophan synthase alpha chain (267 aa).

Active-site proton acceptor residues include glutamate 49 and aspartate 60.

The protein belongs to the TrpA family. In terms of assembly, tetramer of two alpha and two beta chains.

The enzyme catalyses (1S,2R)-1-C-(indol-3-yl)glycerol 3-phosphate + L-serine = D-glyceraldehyde 3-phosphate + L-tryptophan + H2O. Its pathway is amino-acid biosynthesis; L-tryptophan biosynthesis; L-tryptophan from chorismate: step 5/5. Its function is as follows. The alpha subunit is responsible for the aldol cleavage of indoleglycerol phosphate to indole and glyceraldehyde 3-phosphate. The protein is Tryptophan synthase alpha chain of Chloroflexus aggregans (strain MD-66 / DSM 9485).